The following is a 326-amino-acid chain: MAFTWIRHHILGLEDWQPEEYQTLLQTASSFREVLSRRTKKVPALQGQVVTNLFFEPSTRTRSSFELAAKRLSADVLNFAPGSSSLTKGETILDTALTYVAMGTDIFVIRHQQSGVPDLIAGEMDRLESGVSILNAGDGQHEHPSQGLLDLFTICCLLDEENPRLELLEGKKIAIVGDILHSRVARSNIWSLTTAGAEVHLSAPPTLLPKYFGELCDRLFLHWDLEPALEKADFVMTLRLQKERMTANLLPSLREYHQSFGITRPRLQSCQPGVKVLHPGPVNRGVEISSDLMDDPDFSLISQQVTSGVAVRMALLYLIGNLRSDQ.

The carbamoyl phosphate site is built by arginine 60 and threonine 61. Residue lysine 88 participates in L-aspartate binding. Arginine 110, histidine 143, and glutamine 146 together coordinate carbamoyl phosphate. L-aspartate contacts are provided by arginine 183 and arginine 239. Carbamoyl phosphate contacts are provided by glycine 280 and proline 281.

It belongs to the aspartate/ornithine carbamoyltransferase superfamily. ATCase family. As to quaternary structure, heterododecamer (2C3:3R2) of six catalytic PyrB chains organized as two trimers (C3), and six regulatory PyrI chains organized as three dimers (R2).

The enzyme catalyses carbamoyl phosphate + L-aspartate = N-carbamoyl-L-aspartate + phosphate + H(+). It participates in pyrimidine metabolism; UMP biosynthesis via de novo pathway; (S)-dihydroorotate from bicarbonate: step 2/3. Functionally, catalyzes the condensation of carbamoyl phosphate and aspartate to form carbamoyl aspartate and inorganic phosphate, the committed step in the de novo pyrimidine nucleotide biosynthesis pathway. The chain is Aspartate carbamoyltransferase catalytic subunit from Microcystis aeruginosa (strain NIES-843 / IAM M-2473).